The primary structure comprises 180 residues: Crossover junction endodeoxyribonuclease RuvC (180 aa).

Catalysis depends on residues Asp-9, Glu-74, and Asp-146. Residues Asp-9, Glu-74, and Asp-146 each contribute to the Mg(2+) site.

Belongs to the RuvC family. In terms of assembly, homodimer which binds Holliday junction (HJ) DNA. The HJ becomes 2-fold symmetrical on binding to RuvC with unstacked arms; it has a different conformation from HJ DNA in complex with RuvA. In the full resolvosome a probable DNA-RuvA(4)-RuvB(12)-RuvC(2) complex forms which resolves the HJ. The cofactor is Mg(2+).

It is found in the cytoplasm. The catalysed reaction is Endonucleolytic cleavage at a junction such as a reciprocal single-stranded crossover between two homologous DNA duplexes (Holliday junction).. The RuvA-RuvB-RuvC complex processes Holliday junction (HJ) DNA during genetic recombination and DNA repair. Endonuclease that resolves HJ intermediates. Cleaves cruciform DNA by making single-stranded nicks across the HJ at symmetrical positions within the homologous arms, yielding a 5'-phosphate and a 3'-hydroxyl group; requires a central core of homology in the junction. The consensus cleavage sequence is 5'-(A/T)TT(C/G)-3'. Cleavage occurs on the 3'-side of the TT dinucleotide at the point of strand exchange. HJ branch migration catalyzed by RuvA-RuvB allows RuvC to scan DNA until it finds its consensus sequence, where it cleaves and resolves the cruciform DNA. The chain is Crossover junction endodeoxyribonuclease RuvC from Methylobacillus flagellatus (strain ATCC 51484 / DSM 6875 / VKM B-1610 / KT).